A 154-amino-acid chain; its full sequence is 6,7-dimethyl-8-ribityllumazine synthase (154 aa).

Residues Phe-22, 56 to 58 (AFE), and 80 to 82 (AVI) each bind 5-amino-6-(D-ribitylamino)uracil. (2S)-2-hydroxy-3-oxobutyl phosphate is bound at residue 85–86 (ET). His-88 serves as the catalytic Proton donor. Phe-113 contributes to the 5-amino-6-(D-ribitylamino)uracil binding site. Residue Arg-127 coordinates (2S)-2-hydroxy-3-oxobutyl phosphate.

It belongs to the DMRL synthase family.

The catalysed reaction is (2S)-2-hydroxy-3-oxobutyl phosphate + 5-amino-6-(D-ribitylamino)uracil = 6,7-dimethyl-8-(1-D-ribityl)lumazine + phosphate + 2 H2O + H(+). It participates in cofactor biosynthesis; riboflavin biosynthesis; riboflavin from 2-hydroxy-3-oxobutyl phosphate and 5-amino-6-(D-ribitylamino)uracil: step 1/2. In terms of biological role, catalyzes the formation of 6,7-dimethyl-8-ribityllumazine by condensation of 5-amino-6-(D-ribitylamino)uracil with 3,4-dihydroxy-2-butanone 4-phosphate. This is the penultimate step in the biosynthesis of riboflavin. This chain is 6,7-dimethyl-8-ribityllumazine synthase, found in Thermoanaerobacter pseudethanolicus (strain ATCC 33223 / 39E) (Clostridium thermohydrosulfuricum).